The chain runs to 441 residues: Ribulose bisphosphate carboxylase large chain (441 aa).

The residue at position 4 (Lys4) is an N6,N6,N6-trimethyllysine. Residues Asn113 and Thr163 each coordinate substrate. Lys165 serves as the catalytic Proton acceptor. Position 167 (Lys167) interacts with substrate. Residues Lys191, Asp193, and Glu194 each contribute to the Mg(2+) site. At Lys191 the chain carries N6-carboxylysine. The active-site Proton acceptor is His284. 3 residues coordinate substrate: Arg285, His317, and Ser369.

Belongs to the RuBisCO large chain family. Type I subfamily. As to quaternary structure, heterohexadecamer of 8 large chains and 8 small chains; disulfide-linked. The disulfide link is formed within the large subunit homodimers. Requires Mg(2+) as cofactor. Post-translationally, the disulfide bond which can form in the large chain dimeric partners within the hexadecamer appears to be associated with oxidative stress and protein turnover.

Its subcellular location is the plastid. The protein localises to the chloroplast. It carries out the reaction 2 (2R)-3-phosphoglycerate + 2 H(+) = D-ribulose 1,5-bisphosphate + CO2 + H2O. It catalyses the reaction D-ribulose 1,5-bisphosphate + O2 = 2-phosphoglycolate + (2R)-3-phosphoglycerate + 2 H(+). In terms of biological role, ruBisCO catalyzes two reactions: the carboxylation of D-ribulose 1,5-bisphosphate, the primary event in carbon dioxide fixation, as well as the oxidative fragmentation of the pentose substrate in the photorespiration process. Both reactions occur simultaneously and in competition at the same active site. The sequence is that of Ribulose bisphosphate carboxylase large chain from Darlingtonia californica (California pitcher plant).